A 540-amino-acid polypeptide reads, in one-letter code: GMP synthase [glutamine-hydrolyzing] (540 aa).

A Glutamine amidotransferase type-1 domain is found at 29 to 222 (KILIVDFGSQ…VRKVAGLTGD (194 aa)). The active-site Nucleophile is the cysteine 106. Active-site residues include histidine 196 and glutamate 198. The 193-residue stretch at 223-415 (WTMRAFREEA…LGLPDVFVGR (193 aa)) folds into the GMPS ATP-PPase domain. Position 250-256 (250-256 (SGGVDSA)) interacts with ATP.

As to quaternary structure, homodimer.

It carries out the reaction XMP + L-glutamine + ATP + H2O = GMP + L-glutamate + AMP + diphosphate + 2 H(+). Its pathway is purine metabolism; GMP biosynthesis; GMP from XMP (L-Gln route): step 1/1. Functionally, catalyzes the synthesis of GMP from XMP. The chain is GMP synthase [glutamine-hydrolyzing] from Rhodopseudomonas palustris (strain ATCC BAA-98 / CGA009).